The following is a 157-amino-acid chain: Urease accessory protein UreE (157 aa).

It belongs to the UreE family.

It is found in the cytoplasm. Functionally, involved in urease metallocenter assembly. Binds nickel. Probably functions as a nickel donor during metallocenter assembly. The protein is Urease accessory protein UreE of Corynebacterium glutamicum (strain ATCC 13032 / DSM 20300 / JCM 1318 / BCRC 11384 / CCUG 27702 / LMG 3730 / NBRC 12168 / NCIMB 10025 / NRRL B-2784 / 534).